Here is a 329-residue protein sequence, read N- to C-terminus: uncharacterized protein (329 aa).

7 helical membrane-spanning segments follow: residues 29–49 (IVLW…AISH), 78–98 (VLVA…CWMG), 120–140 (KKWL…SLLV), 164–184 (WMIG…LIYL), 217–237 (YFFL…LLVI), 260–280 (FFWT…SFIV), and 299–319 (GSSL…LLFI).

It to M.pneumoniae MPN_129.

The protein localises to the cell membrane. This is an uncharacterized protein from Mycoplasma pneumoniae (strain ATCC 29342 / M129 / Subtype 1) (Mycoplasmoides pneumoniae).